The primary structure comprises 792 residues: Coiled-coil domain-containing protein R3HCC1L (792 aa).

The tract at residues 7-27 (RCRVRARRPDMALYVPKARRG) is EJC-binding motif; may mediate interaction with the EJC. 2 disordered regions span residues 32–61 (KTGD…QKEV) and 527–567 (EFKT…TSHT). Position 688 is a phosphoserine (Ser-688). Phosphothreonine is present on Thr-712. Residues 751-783 (RSKQSKTEREAELKKLQEARERKRLEAKQREDI) adopt a coiled-coil conformation. A disordered region spans residues 772 to 792 (RKRLEAKQREDIWEGRDQSTV).

May interact with the exon junction complex (EJC) composed at least of CASC3, EIF4A3, MAGOH and RBM8A. Expressed in placenta.

The protein is Coiled-coil domain-containing protein R3HCC1L (R3HCC1L) of Homo sapiens (Human).